A 430-amino-acid polypeptide reads, in one-letter code: Divergent protein kinase domain 2A (430 aa).

An N-terminal signal peptide occupies residues 1–35; that stretch reads MWRLVPPKLGRLSRSLKLAALGSLLVLMVLHSPSL.

The protein belongs to the DIPK family.

Its subcellular location is the cytoplasmic vesicle. The protein localises to the COPI-coated vesicle. The protein resides in the golgi apparatus. It is found in the secreted. May play a role in cardiomyocyte proliferation through paracrine signaling and activation of the PPI3K-AKT-CDK7 signaling cascade. This is Divergent protein kinase domain 2A from Homo sapiens (Human).